A 200-amino-acid chain; its full sequence is Large ribosomal subunit protein bL25 (200 aa).

Disordered regions lie at residues 1 to 20 (MTIEFNATKREGQGSSASRR) and 179 to 200 (PVVASAQTTRGAAAAEGEGEAA).

It belongs to the bacterial ribosomal protein bL25 family. CTC subfamily. Part of the 50S ribosomal subunit; part of the 5S rRNA/L5/L18/L25 subcomplex. Contacts the 5S rRNA. Binds to the 5S rRNA independently of L5 and L18.

This is one of the proteins that binds to the 5S RNA in the ribosome where it forms part of the central protuberance. This Azoarcus sp. (strain BH72) protein is Large ribosomal subunit protein bL25.